Here is a 311-residue protein sequence, read N- to C-terminus: Aspartate carbamoyltransferase catalytic subunit (311 aa).

2 residues coordinate carbamoyl phosphate: arginine 58 and threonine 59. Lysine 86 contacts L-aspartate. Residues arginine 108, histidine 136, and glutamine 139 each coordinate carbamoyl phosphate. 2 residues coordinate L-aspartate: arginine 169 and arginine 223. The carbamoyl phosphate site is built by glycine 264 and proline 265.

This sequence belongs to the aspartate/ornithine carbamoyltransferase superfamily. ATCase family. As to quaternary structure, heterododecamer (2C3:3R2) of six catalytic PyrB chains organized as two trimers (C3), and six regulatory PyrI chains organized as three dimers (R2).

The enzyme catalyses carbamoyl phosphate + L-aspartate = N-carbamoyl-L-aspartate + phosphate + H(+). It functions in the pathway pyrimidine metabolism; UMP biosynthesis via de novo pathway; (S)-dihydroorotate from bicarbonate: step 2/3. In terms of biological role, catalyzes the condensation of carbamoyl phosphate and aspartate to form carbamoyl aspartate and inorganic phosphate, the committed step in the de novo pyrimidine nucleotide biosynthesis pathway. The sequence is that of Aspartate carbamoyltransferase catalytic subunit from Ruegeria pomeroyi (strain ATCC 700808 / DSM 15171 / DSS-3) (Silicibacter pomeroyi).